The sequence spans 312 residues: Apolipoprotein E (312 aa).

Positions 1–18 (MKALWALLLVPLLTGCLA) are cleaved as a signal peptide. Tandem repeats lie at residues 72 to 93 (VLME…EQLG), 94 to 115 (PVAE…ARLG), 116 to 137 (ADME…TMLG), 138 to 159 (QSTE…KRLM), 160 to 181 (RDAD…EGAE), 182 to 203 (RGVS…QRTA), 204 to 225 (NLGS…DRIR), and 226 to 247 (GRLE…DQME). The segment at 72 to 247 (VLMEDTMTEV…RLEEVRDQME (176 aa)) is 8 X 22 AA approximate tandem repeats. A Methionine sulfoxide modification is found at Met135. Ser139 bears the Phosphoserine mark. Residues 150–160 (HLRKMRKRLMR) are LDL and other lipoprotein receptors binding. The tract at residues 150–160 (HLRKMRKRLMR) is LDL receptor binding. 154–157 (MRKR) provides a ligand contact to heparin. The interval 202-282 (TANLGSGAAQ…GWFEPLVEDM (81 aa)) is lipid-binding and lipoprotein association. Residue 221–228 (SDRIRGRL) coordinates heparin. The segment at 258-312 (QQIRLQAEVFQARLKGWFEPLVEDMQRQWANLMEKIQASVATNSIASTTVPLENQ) is homooligomerization. Residues 270–282 (RLKGWFEPLVEDM) are specificity for association with VLDL.

This sequence belongs to the apolipoprotein A1/A4/E family. Homotetramer. May interact with ABCA1; functionally associated with ABCA1 in the biogenesis of HDLs. May interact with APP/A4 amyloid-beta peptide; the interaction is extremely stable in vitro but its physiological significance is unclear. May interact with MAPT. May interact with MAP2. In the cerebrospinal fluid, interacts with secreted SORL1. Interacts with PMEL; this allows the loading of PMEL luminal fragment on ILVs to induce fibril nucleation. In terms of processing, APOE exists as multiple glycosylated and sialylated glycoforms within cells and in plasma. The extent of glycosylation and sialylation are tissue and context specific. Post-translationally, glycated in plasma VLDL. Phosphorylated by FAM20C in the extracellular medium.

Its subcellular location is the secreted. It localises to the extracellular space. The protein localises to the extracellular matrix. It is found in the extracellular vesicle. The protein resides in the endosome. Its subcellular location is the multivesicular body. APOE is an apolipoprotein, a protein associating with lipid particles, that mainly functions in lipoprotein-mediated lipid transport between organs via the plasma and interstitial fluids. APOE is a core component of plasma lipoproteins and is involved in their production, conversion and clearance. Apolipoproteins are amphipathic molecules that interact both with lipids of the lipoprotein particle core and the aqueous environment of the plasma. As such, APOE associates with chylomicrons, chylomicron remnants, very low density lipoproteins (VLDL) and intermediate density lipoproteins (IDL) but shows a preferential binding to high-density lipoproteins (HDL). It also binds a wide range of cellular receptors including the LDL receptor/LDLR, the LDL receptor-related proteins LRP1, LRP2 and LRP8 and the very low-density lipoprotein receptor/VLDLR that mediate the cellular uptake of the APOE-containing lipoprotein particles. Finally, APOE also has a heparin-binding activity and binds heparan-sulfate proteoglycans on the surface of cells, a property that supports the capture and the receptor-mediated uptake of APOE-containing lipoproteins by cells. A main function of APOE is to mediate lipoprotein clearance through the uptake of chylomicrons, VLDLs, and HDLs by hepatocytes. APOE is also involved in the biosynthesis by the liver of VLDLs as well as their uptake by peripheral tissues ensuring the delivery of triglycerides and energy storage in muscle, heart and adipose tissues. By participating in the lipoprotein-mediated distribution of lipids among tissues, APOE plays a critical role in plasma and tissues lipid homeostasis. APOE is also involved in two steps of reverse cholesterol transport, the HDLs-mediated transport of cholesterol from peripheral tissues to the liver, and thereby plays an important role in cholesterol homeostasis. First, it is functionally associated with ABCA1 in the biogenesis of HDLs in tissues. Second, it is enriched in circulating HDLs and mediates their uptake by hepatocytes. APOE also plays an important role in lipid transport in the central nervous system, regulating neuron survival and sprouting. This chain is Apolipoprotein E (Apoe), found in Rattus rattus (Black rat).